The following is a 334-amino-acid chain: Dihydroorotate dehydrogenase (quinone) (334 aa).

Residues 61 to 65 (AGLDK) and T85 each bind FMN. A substrate-binding site is contributed by K65. 110–114 (NRMGF) lines the substrate pocket. N138 and N171 together coordinate FMN. N171 is a substrate binding site. The Nucleophile role is filled by S174. N176 contacts substrate. 2 residues coordinate FMN: K216 and T244. Residue 245–246 (NT) participates in substrate binding. FMN-binding positions include G266, G295, and 316–317 (YT).

This sequence belongs to the dihydroorotate dehydrogenase family. Type 2 subfamily. In terms of assembly, monomer. FMN is required as a cofactor.

The protein resides in the cell membrane. It catalyses the reaction (S)-dihydroorotate + a quinone = orotate + a quinol. The protein operates within pyrimidine metabolism; UMP biosynthesis via de novo pathway; orotate from (S)-dihydroorotate (quinone route): step 1/1. In terms of biological role, catalyzes the conversion of dihydroorotate to orotate with quinone as electron acceptor. In Idiomarina loihiensis (strain ATCC BAA-735 / DSM 15497 / L2-TR), this protein is Dihydroorotate dehydrogenase (quinone).